Reading from the N-terminus, the 52-residue chain is UPF0391 membrane protein XOO4217 (52 aa).

The next 2 helical transmembrane spans lie at 5 to 25 and 27 to 47; these read AMIF…GIAG and ATNI…ISMF.

This sequence belongs to the UPF0391 family.

The protein resides in the cell membrane. This is UPF0391 membrane protein XOO4217 from Xanthomonas oryzae pv. oryzae (strain KACC10331 / KXO85).